A 185-amino-acid chain; its full sequence is Ribose 1,5-bisphosphate phosphokinase PhnN (185 aa).

Position 10 to 17 (10 to 17 (GPSGSGKD)) interacts with ATP.

Belongs to the ribose 1,5-bisphosphokinase family.

It carries out the reaction alpha-D-ribose 1,5-bisphosphate + ATP = 5-phospho-alpha-D-ribose 1-diphosphate + ADP. Its pathway is metabolic intermediate biosynthesis; 5-phospho-alpha-D-ribose 1-diphosphate biosynthesis; 5-phospho-alpha-D-ribose 1-diphosphate from D-ribose 5-phosphate (route II): step 3/3. Functionally, catalyzes the phosphorylation of ribose 1,5-bisphosphate to 5-phospho-D-ribosyl alpha-1-diphosphate (PRPP). Accepts ATP but not GTP as a phosphoryl donor, and uses ribose 1,5-bisphosphate but not ribose, ribose 1-phosphate, or ribose 5-phosphate as a phosphoryl acceptor. This is Ribose 1,5-bisphosphate phosphokinase PhnN (phnN) from Escherichia coli (strain K12).